The following is a 370-amino-acid chain: Phospho-N-acetylmuramoyl-pentapeptide-transferase (370 aa).

The next 10 helical transmembrane spans lie at 3–23, 54–74, 79–99, 118–138, 161–181, 197–217, 238–258, 262–282, 290–310, and 341–361; these read QIII…PVLI, GLAI…YGLL, AFTA…AVGF, AKLI…LRFP, LAVG…YILI, LAAG…FWQF, LAVL…WNAA, IFMG…ISVT, IIIG…IVVF, and FWLL…GDWL.

It belongs to the glycosyltransferase 4 family. MraY subfamily. Mg(2+) serves as cofactor.

It is found in the cell membrane. The enzyme catalyses UDP-N-acetyl-alpha-D-muramoyl-L-alanyl-gamma-D-glutamyl-meso-2,6-diaminopimeloyl-D-alanyl-D-alanine + di-trans,octa-cis-undecaprenyl phosphate = di-trans,octa-cis-undecaprenyl diphospho-N-acetyl-alpha-D-muramoyl-L-alanyl-D-glutamyl-meso-2,6-diaminopimeloyl-D-alanyl-D-alanine + UMP. Its pathway is cell wall biogenesis; peptidoglycan biosynthesis. Functionally, catalyzes the initial step of the lipid cycle reactions in the biosynthesis of the cell wall peptidoglycan: transfers peptidoglycan precursor phospho-MurNAc-pentapeptide from UDP-MurNAc-pentapeptide onto the lipid carrier undecaprenyl phosphate, yielding undecaprenyl-pyrophosphoryl-MurNAc-pentapeptide, known as lipid I. The sequence is that of Phospho-N-acetylmuramoyl-pentapeptide-transferase from Corynebacterium aurimucosum (strain ATCC 700975 / DSM 44827 / CIP 107346 / CN-1) (Corynebacterium nigricans).